The sequence spans 628 residues: Inactive sodium-dependent neutral amino acid transporter B(0)AT3 (628 aa).

Over 1–26 (MAHAPEPDPAACDLGDERPKWDNKAQ) the chain is Cytoplasmic. Residues 27-47 (YLLSCTGFAVGLGNIWRFPYL) traverse the membrane as a helical segment. Residues 48-51 (CQTY) lie on the Extracellular side of the membrane. A helical membrane pass occupies residues 52-74 (GGGAFLIPYVIALVFEGIPIFHV). Over 75-88 (ELAIGQRLRKGSVG) the chain is Cytoplasmic. Residues 89-111 (VWTAISPYLSGVGLGCVTLSFLI) traverse the membrane as a helical segment. Topologically, residues 112 to 178 (SLYYNTIVAW…ITADINDSGS (67 aa)) are extracellular. N-linked (GlcNAc...) asparagine glycosylation is found at Asn-144, Asn-168, and Asn-174. The helical transmembrane segment at 179-201 (IQWWLLICLAASWAVVYMCVIRG) threads the bilayer. Over 202 to 207 (IETTGK) the chain is Cytoplasmic. Residues 208-230 (VIYFTALFPYLVLTIFLIRGLTL) form a helical membrane-spanning segment. The Extracellular portion of the chain corresponds to 231 to 253 (PGATKGLIYLFTPNMHILQNPRV). The helical transmembrane segment at 254–276 (WLDAATQIFFSLSLAFGGHIAFA) threads the bilayer. The Cytoplasmic portion of the chain corresponds to 277-288 (SYNSPRNDCQKD). The helical transmembrane segment at 289–311 (AVVIALVNRMTSLYASIAVFSVL) threads the bilayer. The Extracellular segment spans residues 312–399 (GFKATNDYEH…TETDLHMPGA (88 aa)). Asn-354 carries N-linked (GlcNAc...) asparagine glycosylation. The chain crosses the membrane as a helical span at residues 400–422 (PVWAMLFFGMLFTLGLSTMFGTV). Residues 423–442 (EAVITPLLDVGVLPRWVPKE) are Cytoplasmic-facing. Residues 443–465 (ALTGLVCLVCFLSATCFTLQSGN) form a helical membrane-spanning segment. The Extracellular segment spans residues 466 to 474 (YWLEIFDNF). Residues 475–497 (AASPNLLMLAFLEVVGVVYVYGM) form a helical membrane-spanning segment. At 498-517 (KRFCDDIAWMTGRRPSPYWR) the chain is on the cytoplasmic side. A helical transmembrane segment spans residues 518 to 540 (LTWRVVSPLLLTIFVAYIILLFW). Residues 541 to 568 (KPLRYKAWNPKYELFPSRQEKLYPGWAR) are Extracellular-facing. The helical transmembrane segment at 569-591 (AACVLLSLLPVLWVPVAALAQLL) threads the bilayer. Topologically, residues 592 to 628 (TRRRRTWRDRDARPDTDMRPDTDTRPDTDMRPDTDMR) are cytoplasmic. Residues 602-628 (DARPDTDMRPDTDTRPDTDMRPDTDMR) form a disordered region.

Belongs to the sodium:neurotransmitter symporter (SNF) (TC 2.A.22) family. SLC6A18 subfamily. As to expression, abundantly expressed in kidney, but not in intestine.

Its subcellular location is the membrane. Does not show neutral amino acid transporter activity. The chain is Inactive sodium-dependent neutral amino acid transporter B(0)AT3 from Homo sapiens (Human).